The following is a 289-amino-acid chain: T-cell ecto-ADP-ribosyltransferase 2 (289 aa).

Positions Met-1–Gly-20 are cleaved as a signal peptide. 2 disulfides stabilise this stretch: Cys-41–Cys-246 and Cys-141–Cys-193. The 181-residue stretch at Glu-61–Lys-241 folds into the TR mART core domain. Asn-79 carries N-linked (GlcNAc...) asparagine glycosylation. NAD(+) contacts are provided by Tyr-98, Arg-146, and Gln-164. The active site involves Arg-146. Ser-167 is a catalytic residue. Ser-202 is a binding site for NAD(+). Glu-209 is a catalytic residue. N-linked (GlcNAc...) asparagine glycosylation occurs at Asn-249. A lipid anchor (GPI-anchor amidated serine) is attached at Ser-260. Positions Ile-261 to Leu-289 are cleaved as a propeptide — removed in mature form.

This sequence belongs to the Arg-specific ADP-ribosyltransferase family. Expressed in spleen, intestine and thymus.

Its subcellular location is the cell membrane. It catalyses the reaction L-arginyl-[protein] + NAD(+) = N(omega)-(ADP-D-ribosyl)-L-arginyl-[protein] + nicotinamide + H(+). The enzyme catalyses NAD(+) + H2O = ADP-D-ribose + nicotinamide + H(+). Its function is as follows. Has both NAD(+) glycohydrolase and ADP-ribosyltransferase activity. This Mus musculus (Mouse) protein is T-cell ecto-ADP-ribosyltransferase 2 (Art2b).